A 229-amino-acid chain; its full sequence is MSASLDRLERKLGYTFKNQDQMLLALTHRSYAGRNNERLEFLGDAILNFVVGEALFERFPQAREGQLSRLRARLVKGETLARLARGFDLGDYLRLGSGELKSGGFRRESILADALEALIGAIYQDADMQTARERILAWLTDEFDGLTLVDTNKDPKTRLQEFLQSRACELPRYEVVDIQGEPHCRTFFVECEVVLLNKKSRGQGVSRRIAEQVAAAAALIALGVENGND.

The 123-residue stretch at 5–127 folds into the RNase III domain; the sequence is LDRLERKLGY…LIGAIYQDAD (123 aa). A Mg(2+)-binding site is contributed by E40. Residue D44 is part of the active site. Residues D113 and E116 each contribute to the Mg(2+) site. The active site involves E116. The DRBM domain occupies 154 to 224; that stretch reads DPKTRLQEFL…AAAALIALGV (71 aa).

It belongs to the ribonuclease III family. In terms of assembly, homodimer. Requires Mg(2+) as cofactor.

It localises to the cytoplasm. The catalysed reaction is Endonucleolytic cleavage to 5'-phosphomonoester.. Digests double-stranded RNA. Involved in the processing of primary rRNA transcript to yield the immediate precursors to the large and small rRNAs (23S and 16S). Processes some mRNAs, and tRNAs when they are encoded in the rRNA operon. Processes pre-crRNA and tracrRNA of type II CRISPR loci if present in the organism. The protein is Ribonuclease 3 of Pseudomonas entomophila (strain L48).